A 309-amino-acid chain; its full sequence is Glutaminase (309 aa).

Substrate is bound by residues serine 64, asparagine 114, glutamate 160, asparagine 167, tyrosine 191, tyrosine 243, and valine 261.

This sequence belongs to the glutaminase family. Homotetramer.

It carries out the reaction L-glutamine + H2O = L-glutamate + NH4(+). This Rhodopseudomonas palustris (strain BisB18) protein is Glutaminase.